We begin with the raw amino-acid sequence, 555 residues long: Phosphomethylpyrimidine synthase (555 aa).

The tract at residues valine 78–arginine 104 is disordered. Substrate is bound by residues asparagine 191, methionine 220, tyrosine 249, histidine 285, serine 305–glycine 307, aspartate 346–arginine 349, and glutamate 385. Histidine 389 lines the Zn(2+) pocket. Tyrosine 412 is a substrate binding site. Histidine 453 provides a ligand contact to Zn(2+). Positions 535, 538, and 543 each coordinate [4Fe-4S] cluster.

Belongs to the ThiC family. [4Fe-4S] cluster serves as cofactor.

It catalyses the reaction 5-amino-1-(5-phospho-beta-D-ribosyl)imidazole + S-adenosyl-L-methionine = 4-amino-2-methyl-5-(phosphooxymethyl)pyrimidine + CO + 5'-deoxyadenosine + formate + L-methionine + 3 H(+). It participates in cofactor biosynthesis; thiamine diphosphate biosynthesis. Its function is as follows. Catalyzes the synthesis of the hydroxymethylpyrimidine phosphate (HMP-P) moiety of thiamine from aminoimidazole ribotide (AIR) in a radical S-adenosyl-L-methionine (SAM)-dependent reaction. The sequence is that of Phosphomethylpyrimidine synthase from Chlorobaculum parvum (strain DSM 263 / NCIMB 8327) (Chlorobium vibrioforme subsp. thiosulfatophilum).